A 729-amino-acid polypeptide reads, in one-letter code: Polyribonucleotide nucleotidyltransferase (729 aa).

Positions 510 and 516 each coordinate Mg(2+). In terms of domain architecture, KH spans 576-635; that stretch reads PRVISVKIPVDKIGEVIGPKGKMINQIQADSGAEITVEDDGTIYIGAADGTSAETARSAI. The S1 motif domain occupies 647-719; the sequence is GERYLGTIVK…ARGKISLSPS (73 aa).

It belongs to the polyribonucleotide nucleotidyltransferase family. Requires Mg(2+) as cofactor.

The protein resides in the cytoplasm. It catalyses the reaction RNA(n+1) + phosphate = RNA(n) + a ribonucleoside 5'-diphosphate. In terms of biological role, involved in mRNA degradation. Catalyzes the phosphorolysis of single-stranded polyribonucleotides processively in the 3'- to 5'-direction. The chain is Polyribonucleotide nucleotidyltransferase from Frankia alni (strain DSM 45986 / CECT 9034 / ACN14a).